The sequence spans 931 residues: MVRHDPFTNSVSEDSSFTPSVNPSTPYPQSGHYRPYYPPQLTYCQGQQGYQYDHTGDVGYGGRSRRHGSWASVNNEDNEELTPLTTGPASSSTFLTTDPYLSGGPDLPLSSSSASISSAGADFLRRQTVPRRGATIKKIKLTNGNFIADYPVPGPVSSSVEAKWLNDKTSNEFWHMRYTAATCDPDDFTPENGWKLKTTSYNRETELLVAITSYNEDKILYARTLHNVMLNIRDICNTKASKFWRRSAEEGRPGWQKIVVALVADGLDPMDKQVLDVLQTIGVFQDGILKKEVDGKKTAAHIFEYTTQLSIDATPQLVQPHPGDPNNLVPVQIIFVLKQENSKKINSHRWLFNALGRQLQPEICVLLDAGTKPGHKAIYHLWEAFYNNQNLGGACGEIHAMIKKGVKLLNPLVAAQNFEYKMSNILDKPLESSFGYVSVLPGAFSAYRYKAIQGRPLTQYFHGDATLAARLGKKGIYGMGIFTKNMFLAEDRILCFELVAKKGEKWVLQYVKPSKAETDVPEQAAELISQRRRWLNGSFAASVYSVFHFFRLYRSGHGPIRMLFLHIQAIYNIFSLIFSWFALANLWLTFSIIIELLPESANINLFGTADITHWINLVFAWVYLAFLMLQLVLALGNRPKAEKGLYILTLWVYAFLSFYLIVCSIILSVVAFKGALRDGGSIGAKLGNLFNSTNGVLVAAIMSTIGIYLIASFLYRDPWHMFSSFPQYMLLAPSFTNVLNIYAFCNLHDVSWGTKGSDRAESLPAISSSKQKDGETAVVEEQQRSQGELDESFKQVVRRAVAPYKPEDADEKPNLDDQNRTFRTRLVVVWLLTNAALAISIQTLNGLDTTKPLVEACLPNSYNPENGTVIVSTNGTCITQALEHDGDKLQDKQQIYFQAILWTTFALSMVRFIGCVFYWAMRQMGRCWRRN.

Disordered stretches follow at residues 1–34 (MVRH…GHYR) and 56–92 (GDVG…ASSS). 2 stretches are compositionally biased toward polar residues: residues 7–28 (FTNS…TPYP) and 83–92 (PLTTGPASSS). Asparagine 536 carries N-linked (GlcNAc...) asparagine glycosylation. Transmembrane regions (helical) follow at residues 573–593 (IFSL…FSII), 615–635 (INLV…VLAL), and 647–667 (ILTL…SIIL). A glycan (N-linked (GlcNAc...) asparagine) is linked at asparagine 691. The next 2 membrane-spanning stretches (helical) occupy residues 695 to 715 (GVLV…SFLY) and 725 to 745 (FPQY…YAFC). The interval 763-789 (LPAISSSKQKDGETAVVEEQQRSQGEL) is disordered. A glycan (N-linked (GlcNAc...) asparagine) is linked at asparagine 819. Residues 826–846 (LVVVWLLTNAALAISIQTLNG) form a helical membrane-spanning segment. N-linked (GlcNAc...) asparagine glycans are attached at residues asparagine 866 and asparagine 874. Residues 899–919 (AILWTTFALSMVRFIGCVFYW) form a helical membrane-spanning segment.

This sequence belongs to the chitin synthase family. Class III subfamily.

Its subcellular location is the cell membrane. The enzyme catalyses [(1-&gt;4)-N-acetyl-beta-D-glucosaminyl](n) + UDP-N-acetyl-alpha-D-glucosamine = [(1-&gt;4)-N-acetyl-beta-D-glucosaminyl](n+1) + UDP + H(+). Polymerizes chitin, a structural polymer of the cell wall and septum, by transferring the sugar moiety of UDP-GlcNAc to the non-reducing end of the growing chitin polymer. This is Chitin synthase 7 from Cryptococcus neoformans var. grubii serotype A (strain H99 / ATCC 208821 / CBS 10515 / FGSC 9487) (Filobasidiella neoformans var. grubii).